We begin with the raw amino-acid sequence, 480 residues long: UDP-N-acetylmuramoylalanine--D-glutamate ligase (480 aa).

127–133 (GTNGKTT) contacts ATP.

The protein belongs to the MurCDEF family.

The protein resides in the cytoplasm. The enzyme catalyses UDP-N-acetyl-alpha-D-muramoyl-L-alanine + D-glutamate + ATP = UDP-N-acetyl-alpha-D-muramoyl-L-alanyl-D-glutamate + ADP + phosphate + H(+). It participates in cell wall biogenesis; peptidoglycan biosynthesis. Cell wall formation. Catalyzes the addition of glutamate to the nucleotide precursor UDP-N-acetylmuramoyl-L-alanine (UMA). The protein is UDP-N-acetylmuramoylalanine--D-glutamate ligase of Tropheryma whipplei (strain TW08/27) (Whipple's bacillus).